A 1498-amino-acid chain; its full sequence is Rap guanine nucleotide exchange factor 2 (1498 aa).

Disordered stretches follow at residues 40 to 59 (HVSS…SSSL) and 68 to 101 (SEAG…SDPL). The span at 83-94 (VDSEDDDDEEDI) shows a compositional bias: acidic residues. An a nucleoside 3',5'-cyclic phosphate-binding site is contributed by 135–252 (AFANMTMSVR…QKVEEEGEIV (118 aa)). In terms of domain architecture, N-terminal Ras-GEF spans 267 to 380 (KGHIVIKGTS…RLLNIACAAK (114 aa)). The region spanning 385–468 (LMTLTKPSRE…LSITVKTNLF (84 aa)) is the PDZ domain. Position 501 is a phosphoserine (serine 501). In terms of domain architecture, Ras-associating spans 606-692 (PDQVLRVFKA…GRYYLKNNME (87 aa)). Threonine 644 bears the Phosphothreonine mark. In terms of domain architecture, Ras-GEF spans 717–944 (STVEVATQLS…SQGSTNATVL (228 aa)). A phosphoserine mark is found at serine 806, serine 930, serine 933, serine 1022, serine 1079, serine 1088, serine 1094, serine 1115, serine 1119, serine 1158, and serine 1175. Residues 1002–1048 (PATNTLPKNPGDKKPVKSETSPVAPRAGSQQKAQAQPPPPQPQPQHK) form a disordered region. The segment at 1094 to 1159 (SLERHKKQAE…RSSIVSNSSF (66 aa)) is disordered. 2 stretches are compositionally biased toward low complexity: residues 1110–1124 (SSQL…QSSP) and 1140–1159 (SDSG…NSSF). Disordered regions lie at residues 1224–1257 (STEE…GSHD), 1304–1371 (TKYN…TKPV), and 1392–1498 (EGRY…VSAV). Polar residues-rich tracts occupy residues 1246-1257 (GSWTSCSSGSHD) and 1306-1330 (YNRQ…SSTG). Positions 1354 to 1365 (EAESSSVTSVTT) are enriched in low complexity. The span at 1487–1498 (TEEDEDEQVSAV) shows a compositional bias: acidic residues.

Belongs to the RAPGEF2 family. Found in a complex, at least composed of KIDINS220, MAGI2, NTRK1 and RAPGEF2; the complex is mainly formed at late endosomes in a neuronal growth factor (NGF)-dependent manner. Interacts (via C-terminal domain) with NEDD4 (via WW domains); this interaction leads to ubiquitination and degradation via the proteasome pathway in a cAMP-independent manner. Interacts with MAGI1 (via PDZ domain). Interacts with ADRB1 (via C-terminal PDZ motif); the interaction is direct. Interacts (via Ras-associating domain) with RAP1A (via GTP-bound active form). Interacts weakly with HRAS (via GDP- and GTP-bound forms). Interacts (via C-terminal domain) with MAGI2 (via PDZ and WW domains). Interacts with CDH1, CTNNB1 and TJP1. In terms of processing, ubiquitinated by NEDD4, leading to proteasomal degradation. Phosphorylation by PLK2 promotes its activity.

The protein localises to the cell junction. It localises to the cytoplasm. It is found in the perinuclear region. The protein resides in the cell membrane. Its subcellular location is the late endosome. Its function is as follows. Functions as a guanine nucleotide exchange factor (GEF), which activates Rap and Ras family of small GTPases by exchanging bound GDP for free GTP in a cAMP-dependent manner. Serves as a link between cell surface receptors and Rap/Ras GTPases in intracellular signaling cascades. Also acts as an effector for Rap1 by direct association with Rap1-GTP thereby leading to the amplification of Rap1-mediated signaling. Shows weak activity on HRAS. It is controversial whether RAPGEF2 binds cAMP and cGMP or not. Its binding to ligand-activated beta-1 adrenergic receptor ADRB1 leads to the Ras activation through the G(s)-alpha signaling pathway. Involved in the cAMP-induced Ras and Erk1/2 signaling pathway that leads to sustained inhibition of long term melanogenesis by reducing dendrite extension and melanin synthesis. Also provides inhibitory signals for cell proliferation of melanoma cells and promotes their apoptosis in a cAMP-independent nanner. Regulates cAMP-induced neuritogenesis by mediating the Rap1/B-Raf/ERK signaling through a pathway that is independent on both PKA and RAPGEF3/RAPGEF4. Involved in neuron migration and in the formation of the major forebrain fiber connections forming the corpus callosum, the anterior commissure and the hippocampal commissure during brain development. Involved in neuronal growth factor (NGF)-induced sustained activation of Rap1 at late endosomes and in brain-derived neurotrophic factor (BDNF)-induced axon outgrowth of hippocampal neurons. Plays a role in the regulation of embryonic blood vessel formation and in the establishment of basal junction integrity and endothelial barrier function. May be involved in the regulation of the vascular endothelial growth factor receptor KDR and cadherin CDH5 expression at allantois endothelial cell-cell junctions. This chain is Rap guanine nucleotide exchange factor 2 (RAPGEF2), found in Canis lupus familiaris (Dog).